Here is a 193-residue protein sequence, read N- to C-terminus: PBAN-type neuropeptides (193 aa).

A signal peptide spans 1 to 19; it reads MYGAVLPGLFFIFISCVVA. At Ile46 the chain carries Isoleucine amide. Leu102 and Leu122 each carry leucine amide. The tract at residues 124-158 is disordered; sequence RRLADDTPATPADQEMYRPDPEQIDSRTKYFSPRL. The span at 138 to 151 shows a compositional bias: basic and acidic residues; it reads EMYRPDPEQIDSRT. Residues Leu158 and Leu168 each carry the leucine amide modification. Positions 186-193 are excised as a propeptide; it reads STNKTQST.

The protein belongs to the pyrokinin family. Expressed in the mandibular, maxillary and labial neuromeres of the male and female brain-subesophageal ganglions, in the corpora cardiaca and all around the corpora allata, and at a lower level in the brain near the calyx and pedunculus of the mushroom body (at protein level). Expressed in larvae and adult of both sexes (at protein level). As to expression, expressed in corpora cardiaca (CC), corpora allata (CA) and gnathal ganglion (GNG) (at protein level). Expression in CC and CA detected in most animals, in GNG in some (at protein level). In terms of tissue distribution, expression not detected in CC, CA, AL or GNG (at protein level). Expressed in corpora cardiaca (CC), corpora allata (CA), antennal lobe (AL) and gnathal ganglion (GNG) (at protein level). Expression in CC, CA and GNG detected in most animals, expression in AL detected in few (at protein level). As to expression, expressed in corpora cardiaca (CC), corpora allata (CA), antennal lobe (AL) and gnathal ganglion (GNG) (at protein level). Expression in CC, CA and GNG detected in all animals, expression in AL detected in some (at protein level). In terms of tissue distribution, expressed in corpora cardiaca (CC), corpora allata (CA), antennal lobe (AL) and gnathal ganglion (GNG) (at protein level). Expression in CC, CA and GNG detected in most animals, expression in AL detected in some animals (at protein level).

The protein localises to the secreted. Functionally, a hormone that controls sex pheromone production in female moths and pheromone responsiveness in male. The protein is PBAN-type neuropeptides of Agrotis ipsilon (Black cutworm moth).